The sequence spans 258 residues: Phosphoadenosine 5'-phosphosulfate reductase (258 aa).

Catalysis depends on C244, which acts as the Nucleophile; cysteine thiosulfonate intermediate.

The protein belongs to the PAPS reductase family. CysH subfamily.

Its subcellular location is the cytoplasm. It catalyses the reaction [thioredoxin]-disulfide + sulfite + adenosine 3',5'-bisphosphate + 2 H(+) = [thioredoxin]-dithiol + 3'-phosphoadenylyl sulfate. It participates in sulfur metabolism; hydrogen sulfide biosynthesis; sulfite from sulfate: step 3/3. Its function is as follows. Catalyzes the formation of sulfite from phosphoadenosine 5'-phosphosulfate (PAPS) using thioredoxin as an electron donor. This Vibrio vulnificus (strain CMCP6) protein is Phosphoadenosine 5'-phosphosulfate reductase.